Here is a 209-residue protein sequence, read N- to C-terminus: Ribosomal RNA large subunit methyltransferase E (209 aa).

S-adenosyl-L-methionine-binding residues include G63, W65, D83, D99, and D124. Catalysis depends on K164, which acts as the Proton acceptor.

It belongs to the class I-like SAM-binding methyltransferase superfamily. RNA methyltransferase RlmE family.

It localises to the cytoplasm. It catalyses the reaction uridine(2552) in 23S rRNA + S-adenosyl-L-methionine = 2'-O-methyluridine(2552) in 23S rRNA + S-adenosyl-L-homocysteine + H(+). Functionally, specifically methylates the uridine in position 2552 of 23S rRNA at the 2'-O position of the ribose in the fully assembled 50S ribosomal subunit. The chain is Ribosomal RNA large subunit methyltransferase E from Shewanella sp. (strain ANA-3).